A 112-amino-acid chain; its full sequence is ATP synthase subunit c (112 aa).

The next 2 helical transmembrane spans lie at 36–56 (FSVLAAGLGLGVAALGGAIGM) and 81–101 (MFIALAMIEAQVIYALVIALI).

This sequence belongs to the ATPase C chain family. In terms of assembly, F-type ATPases have 2 components, F(1) - the catalytic core - and F(0) - the membrane proton channel. F(1) has five subunits: alpha(3), beta(3), gamma(1), delta(1), epsilon(1). F(0) has three main subunits: a(1), b(2) and c(10-14). The alpha and beta chains form an alternating ring which encloses part of the gamma chain. F(1) is attached to F(0) by a central stalk formed by the gamma and epsilon chains, while a peripheral stalk is formed by the delta and b chains.

The protein localises to the cell inner membrane. In terms of biological role, f(1)F(0) ATP synthase produces ATP from ADP in the presence of a proton or sodium gradient. F-type ATPases consist of two structural domains, F(1) containing the extramembraneous catalytic core and F(0) containing the membrane proton channel, linked together by a central stalk and a peripheral stalk. During catalysis, ATP synthesis in the catalytic domain of F(1) is coupled via a rotary mechanism of the central stalk subunits to proton translocation. Its function is as follows. Key component of the F(0) channel; it plays a direct role in translocation across the membrane. A homomeric c-ring of between 10-14 subunits forms the central stalk rotor element with the F(1) delta and epsilon subunits. In Campylobacter jejuni (strain RM1221), this protein is ATP synthase subunit c.